A 414-amino-acid chain; its full sequence is 2,3-diketo-5-methylthiopentyl-1-phosphate enolase (414 aa).

The active-site Proton acceptor is the K99. Substrate contacts are provided by residues K148, 174 to 177 (KDDE), H265, G338, and 360 to 361 (GG). Positions 174, 176, and 177 each coordinate Mg(2+). At K174 the chain carries N6-carboxylysine.

The protein belongs to the RuBisCO large chain family. Type IV subfamily. Homodimer. It depends on Mg(2+) as a cofactor.

The catalysed reaction is 5-methylsulfanyl-2,3-dioxopentyl phosphate = 2-hydroxy-5-methylsulfanyl-3-oxopent-1-enyl phosphate. Its pathway is amino-acid biosynthesis; L-methionine biosynthesis via salvage pathway; L-methionine from S-methyl-5-thio-alpha-D-ribose 1-phosphate: step 3/6. In terms of biological role, catalyzes the enolization of 2,3-diketo-5-methylthiopentyl-1-phosphate (DK-MTP-1-P) into 2-hydroxy-3-keto-5-methylthiopentenyl-1-phosphate (HK-MTPenyl-1-P). The protein is 2,3-diketo-5-methylthiopentyl-1-phosphate enolase of Bacillus cytotoxicus (strain DSM 22905 / CIP 110041 / 391-98 / NVH 391-98).